Reading from the N-terminus, the 191-residue chain is Potassium-transporting ATPase KdpC subunit (191 aa).

The helical transmembrane segment at 6–26 (PAILLFILLTLVTGGLYPLLT) threads the bilayer.

It belongs to the KdpC family. As to quaternary structure, the system is composed of three essential subunits: KdpA, KdpB and KdpC.

Its subcellular location is the cell inner membrane. Functionally, part of the high-affinity ATP-driven potassium transport (or Kdp) system, which catalyzes the hydrolysis of ATP coupled with the electrogenic transport of potassium into the cytoplasm. This subunit acts as a catalytic chaperone that increases the ATP-binding affinity of the ATP-hydrolyzing subunit KdpB by the formation of a transient KdpB/KdpC/ATP ternary complex. In Enterobacter sp. (strain 638), this protein is Potassium-transporting ATPase KdpC subunit.